We begin with the raw amino-acid sequence, 429 residues long: Histidine--tRNA ligase (429 aa).

The protein belongs to the class-II aminoacyl-tRNA synthetase family. In terms of assembly, homodimer.

It is found in the cytoplasm. It carries out the reaction tRNA(His) + L-histidine + ATP = L-histidyl-tRNA(His) + AMP + diphosphate + H(+). The chain is Histidine--tRNA ligase from Streptococcus pneumoniae (strain Taiwan19F-14).